The primary structure comprises 1057 residues: Carbamoyl phosphate synthase large chain (1057 aa).

Residues Met1 to Glu401 form a carboxyphosphate synthetic domain region. Arg129, Arg169, Gly175, Gly176, Lys208, Ile210, Glu215, Gly241, Ile242, His243, Gln284, and Glu298 together coordinate ATP. Residues Arg133–Val327 form the ATP-grasp 1 domain. Residues Gln284, Glu298, and Asn300 each contribute to the Mg(2+) site. Residues Gln284, Glu298, and Asn300 each coordinate Mn(2+). An oligomerization domain region spans residues Tyr402 to Ser546. The tract at residues Ile547–Gly929 is carbamoyl phosphate synthetic domain. An ATP-grasp 2 domain is found at Glu671–Ile861. ATP contacts are provided by Arg707, Arg746, Leu748, Glu752, Gly777, Val778, His779, Ser780, Gln820, and Glu832. Mg(2+)-binding residues include Gln820, Glu832, and Asn834. Mn(2+) contacts are provided by Gln820, Glu832, and Asn834. Residues Val930–Met1057 enclose the MGS-like domain. Positions Val930 to Met1057 are allosteric domain.

Belongs to the CarB family. As to quaternary structure, composed of two chains; the small (or glutamine) chain promotes the hydrolysis of glutamine to ammonia, which is used by the large (or ammonia) chain to synthesize carbamoyl phosphate. Tetramer of heterodimers (alpha,beta)4. Mg(2+) serves as cofactor. Mn(2+) is required as a cofactor.

The catalysed reaction is hydrogencarbonate + L-glutamine + 2 ATP + H2O = carbamoyl phosphate + L-glutamate + 2 ADP + phosphate + 2 H(+). The enzyme catalyses hydrogencarbonate + NH4(+) + 2 ATP = carbamoyl phosphate + 2 ADP + phosphate + 2 H(+). It participates in amino-acid biosynthesis; L-arginine biosynthesis; carbamoyl phosphate from bicarbonate: step 1/1. The protein operates within pyrimidine metabolism; UMP biosynthesis via de novo pathway; (S)-dihydroorotate from bicarbonate: step 1/3. Functionally, large subunit of the glutamine-dependent carbamoyl phosphate synthetase (CPSase). CPSase catalyzes the formation of carbamoyl phosphate from the ammonia moiety of glutamine, carbonate, and phosphate donated by ATP, constituting the first step of 2 biosynthetic pathways, one leading to arginine and/or urea and the other to pyrimidine nucleotides. The large subunit (synthetase) binds the substrates ammonia (free or transferred from glutamine from the small subunit), hydrogencarbonate and ATP and carries out an ATP-coupled ligase reaction, activating hydrogencarbonate by forming carboxy phosphate which reacts with ammonia to form carbamoyl phosphate. The polypeptide is Carbamoyl phosphate synthase large chain (Staphylococcus aureus (strain bovine RF122 / ET3-1)).